The primary structure comprises 143 residues: Small ribosomal subunit protein bS6 (143 aa).

Residues 96–143 (VTEASPMAAAKEERRDDRREVKKDVAAAPVEAKEDSVEEKSEEAASEE) are disordered. Over residues 105–143 (AKEERRDDRREVKKDVAAAPVEAKEDSVEEKSEEAASEE) the composition is skewed to basic and acidic residues.

This sequence belongs to the bacterial ribosomal protein bS6 family.

Functionally, binds together with bS18 to 16S ribosomal RNA. The chain is Small ribosomal subunit protein bS6 from Colwellia psychrerythraea (strain 34H / ATCC BAA-681) (Vibrio psychroerythus).